A 122-amino-acid chain; its full sequence is Hydrogenase maturation factor HypA (122 aa).

His-2 contacts Ni(2+). Cys-73, Cys-75, Cys-95, and Cys-98 together coordinate Zn(2+).

Belongs to the HypA/HybF family.

In terms of biological role, involved in the maturation of [NiFe] hydrogenases. Required for nickel insertion into the metal center of the hydrogenase. This chain is Hydrogenase maturation factor HypA, found in Methanothermobacter thermautotrophicus (strain ATCC 29096 / DSM 1053 / JCM 10044 / NBRC 100330 / Delta H) (Methanobacterium thermoautotrophicum).